Here is a 65-residue protein sequence, read N- to C-terminus: Large ribosomal subunit protein uL29 (65 aa).

The protein belongs to the universal ribosomal protein uL29 family.

This chain is Large ribosomal subunit protein uL29, found in Acinetobacter baylyi (strain ATCC 33305 / BD413 / ADP1).